Reading from the N-terminus, the 77-residue chain is DNA-directed RNA polymerase subunit epsilon (77 aa).

Belongs to the RNA polymerase subunit epsilon family. As to quaternary structure, RNAP is composed of a core of 2 alpha, a beta and a beta' subunit. The core is associated with a delta subunit, and at least one of epsilon or omega. When a sigma factor is associated with the core the holoenzyme is formed, which can initiate transcription.

The enzyme catalyses RNA(n) + a ribonucleoside 5'-triphosphate = RNA(n+1) + diphosphate. In terms of biological role, a non-essential component of RNA polymerase (RNAP). The sequence is that of DNA-directed RNA polymerase subunit epsilon from Lactobacillus delbrueckii subsp. bulgaricus (strain ATCC 11842 / DSM 20081 / BCRC 10696 / JCM 1002 / NBRC 13953 / NCIMB 11778 / NCTC 12712 / WDCM 00102 / Lb 14).